Here is a 418-residue protein sequence, read N- to C-terminus: AP-3 complex subunit mu-1 (418 aa).

Residues 176-417 enclose the MHD domain; that stretch reads NNEAYFDVIE…ITKAGKFQVR (242 aa).

It belongs to the adaptor complexes medium subunit family. The AP-3 complex associates with the BLOC-1 complex.

Its subcellular location is the golgi apparatus. It is found in the cytoplasmic vesicle membrane. Functionally, part of the AP-3 complex, an adaptor-related complex which is not clathrin-associated. The complex is associated with the Golgi region as well as more peripheral structures. It facilitates the budding of vesicles from the Golgi membrane and may be directly involved in trafficking to lysosomes. In concert with the BLOC-1 complex, AP-3 is required to target cargos into vesicles assembled at cell bodies for delivery into neurites and nerve terminals. The chain is AP-3 complex subunit mu-1 (AP3M1) from Gallus gallus (Chicken).